The following is a 234-amino-acid chain: Geranylgeranylglyceryl phosphate synthase (234 aa).

Positions 24 and 52 each coordinate Mg(2+). Sn-glycerol 1-phosphate-binding positions include 172-178 (YLEAGSG), 203-204 (GG), and 225-226 (GT).

This sequence belongs to the GGGP/HepGP synthase family. Group II subfamily. Homodimer. Requires Mg(2+) as cofactor.

The enzyme catalyses sn-glycerol 1-phosphate + (2E,6E,10E)-geranylgeranyl diphosphate = sn-3-O-(geranylgeranyl)glycerol 1-phosphate + diphosphate. Prenyltransferase that catalyzes the transfer of the geranylgeranyl moiety of geranylgeranyl diphosphate (GGPP) to the C3 hydroxyl of sn-glycerol-1-phosphate (G1P). The chain is Geranylgeranylglyceryl phosphate synthase from Zunongwangia profunda (strain DSM 18752 / CCTCC AB 206139 / SM-A87) (Wangia profunda).